We begin with the raw amino-acid sequence, 96 residues long: Small ribosomal subunit protein bS6 (96 aa).

Belongs to the bacterial ribosomal protein bS6 family.

Its function is as follows. Binds together with bS18 to 16S ribosomal RNA. This chain is Small ribosomal subunit protein bS6, found in Streptococcus pneumoniae serotype 19F (strain G54).